A 378-amino-acid chain; its full sequence is Deoxyguanosinetriphosphate triphosphohydrolase-like protein (378 aa).

The region spanning 62–198 is the HD domain; that stretch reads RLTHTIEVAQ…AAVADDVAYN (137 aa).

This sequence belongs to the dGTPase family. Type 2 subfamily.

The sequence is that of Deoxyguanosinetriphosphate triphosphohydrolase-like protein from Paracoccus denitrificans (strain Pd 1222).